A 227-amino-acid polypeptide reads, in one-letter code: Ribose-5-phosphate isomerase A (227 aa).

Substrate is bound by residues 26–29 (TGST), 82–85 (DGAD), and 95–98 (KGGG). Glu-104 serves as the catalytic Proton acceptor. Lys-122 lines the substrate pocket.

Belongs to the ribose 5-phosphate isomerase family. As to quaternary structure, homodimer.

It catalyses the reaction aldehydo-D-ribose 5-phosphate = D-ribulose 5-phosphate. It participates in carbohydrate degradation; pentose phosphate pathway; D-ribose 5-phosphate from D-ribulose 5-phosphate (non-oxidative stage): step 1/1. Its function is as follows. Catalyzes the reversible conversion of ribose-5-phosphate to ribulose 5-phosphate. The sequence is that of Ribose-5-phosphate isomerase A from Streptococcus pneumoniae serotype 4 (strain ATCC BAA-334 / TIGR4).